A 126-amino-acid chain; its full sequence is DNA-directed RNA polymerase subunit omega (126 aa).

Belongs to the RNA polymerase subunit omega family. In terms of assembly, the RNAP catalytic core consists of 2 alpha, 1 beta, 1 beta' and 1 omega subunit. When a sigma factor is associated with the core the holoenzyme is formed, which can initiate transcription.

The catalysed reaction is RNA(n) + a ribonucleoside 5'-triphosphate = RNA(n+1) + diphosphate. Functionally, promotes RNA polymerase assembly. Latches the N- and C-terminal regions of the beta' subunit thereby facilitating its interaction with the beta and alpha subunits. This is DNA-directed RNA polymerase subunit omega from Rickettsia bellii (strain OSU 85-389).